A 142-amino-acid polypeptide reads, in one-letter code: Arginine decarboxylase proenzyme (142 aa).

Serine 81 serves as the catalytic Schiff-base intermediate with substrate; via pyruvic acid. Pyruvic acid (Ser); by autocatalysis is present on serine 81. Histidine 86 (proton acceptor; for processing activity) is an active-site residue. Cysteine 101 functions as the Proton donor; for catalytic activity in the catalytic mechanism.

The protein belongs to the prokaryotic AdoMetDC family. Type 1 subfamily. In terms of assembly, heterooctamer of four alpha and four beta chains arranged as a tetramer of alpha/beta heterodimers. Pyruvate is required as a cofactor. Post-translationally, is synthesized initially as an inactive proenzyme. Formation of the active enzyme involves a self-maturation process in which the active site pyruvoyl group is generated from an internal serine residue via an autocatalytic post-translational modification. Two non-identical subunits are generated from the proenzyme in this reaction, and the pyruvate is formed at the N-terminus of the alpha chain, which is derived from the carboxyl end of the proenzyme. The post-translation cleavage follows an unusual pathway, termed non-hydrolytic serinolysis, in which the side chain hydroxyl group of the serine supplies its oxygen atom to form the C-terminus of the beta chain, while the remainder of the serine residue undergoes an oxidative deamination to produce ammonia and the pyruvoyl group blocking the N-terminus of the alpha chain.

The enzyme catalyses L-arginine + H(+) = agmatine + CO2. It functions in the pathway amine and polyamine biosynthesis; agmatine biosynthesis; agmatine from L-arginine: step 1/1. Specifically catalyzes the decarboxylation of L-arginine to agmatine. Has no S-adenosylmethionine decarboxylase (AdoMetDC) activity. The chain is Arginine decarboxylase proenzyme from Hyperthermus butylicus (strain DSM 5456 / JCM 9403 / PLM1-5).